Consider the following 584-residue polypeptide: Actin-binding protein IPP (584 aa).

Residues 37–104 (CDVQLQVGKE…IYTGVVNIAV (68 aa)) enclose the BTB domain. 6 Kelch repeats span residues 296-343 (YTRL…VVGG), 344-390 (MVYA…VCYG), 391-437 (AIYA…EMQG), 439-485 (IYAV…ALND), 487-533 (IYAI…TVNG), and 535-583 (LYVS…GVAV).

In terms of tissue distribution, expression seems confined to tissues derived from trophectoderm and primitive endoderm.

It is found in the cytoplasm. The protein localises to the cytoskeleton. May play a role in organizing the actin cytoskeleton. This chain is Actin-binding protein IPP (Ipp), found in Mus musculus (Mouse).